Here is a 105-residue protein sequence, read N- to C-terminus: Large ribosomal subunit protein bL21 (105 aa).

This sequence belongs to the bacterial ribosomal protein bL21 family. Part of the 50S ribosomal subunit. Contacts protein L20.

In terms of biological role, this protein binds to 23S rRNA in the presence of protein L20. This is Large ribosomal subunit protein bL21 from Methylobacterium nodulans (strain LMG 21967 / CNCM I-2342 / ORS 2060).